A 491-amino-acid polypeptide reads, in one-letter code: Cytosolic Fe-S cluster assembly factor NAR1 (491 aa).

Residues cysteine 20, cysteine 59, cysteine 62, cysteine 65, cysteine 177, cysteine 231, cysteine 412, and cysteine 416 each contribute to the [4Fe-4S] cluster site.

Belongs to the NARF family. In terms of assembly, interacts with CIA1.

It localises to the cytoplasm. The protein resides in the nucleus. Its function is as follows. Essential component of a cytosolic Fe/S protein assembly machinery. Required for maturation of extramitochondrial Fe/S proteins. May play a role in the transfer of pre-assembled Fe/S clusters to target apoproteins. This is Cytosolic Fe-S cluster assembly factor NAR1 (NAR1) from Saccharomyces cerevisiae (strain ATCC 204508 / S288c) (Baker's yeast).